Consider the following 423-residue polypeptide: AP-1 complex subunit mu-2 (423 aa).

The MHD domain maps to 168–421 (KNEVFIDVIE…ITQSGDYQLR (254 aa)).

Belongs to the adaptor complexes medium subunit family. In terms of assembly, adaptor protein complex 1 (AP-1) is a heterotetramer composed of two large adaptins (gamma-type subunit AP1G1 and beta-type subunit AP1B1), a medium adaptin (mu-type subunit AP1M1 or AP1M2) and a small adaptin (sigma-type subunit AP1S1 or AP1S2 or AP1S3). Interacts with P2X4. In terms of processing, phosphorylation of membrane-bound AP1M1/AP1M2 increases its affinity for sorting signals.

The protein localises to the cytoplasmic vesicle. The protein resides in the clathrin-coated vesicle membrane. It is found in the golgi apparatus. Subunit of clathrin-associated adaptor protein complex 1 that plays a role in protein sorting in the trans-Golgi network (TGN) and endosomes. The AP complexes mediate the recruitment of clathrin to membranes and the recognition of sorting signals within the cytosolic tails of transmembrane cargo molecules. This is AP-1 complex subunit mu-2 from Bos taurus (Bovine).